A 175-amino-acid polypeptide reads, in one-letter code: Ribosome maturation factor RimM (175 aa).

Residues 98-175 (EGEYYWHQLE…EMRVDWDADF (78 aa)) form the PRC barrel domain.

It belongs to the RimM family. In terms of assembly, binds ribosomal protein uS19.

The protein resides in the cytoplasm. An accessory protein needed during the final step in the assembly of 30S ribosomal subunit, possibly for assembly of the head region. Essential for efficient processing of 16S rRNA. May be needed both before and after RbfA during the maturation of 16S rRNA. It has affinity for free ribosomal 30S subunits but not for 70S ribosomes. The sequence is that of Ribosome maturation factor RimM from Pseudomonas aeruginosa (strain UCBPP-PA14).